The sequence spans 351 residues: Sulfate/thiosulfate import ATP-binding protein CysA (351 aa).

In terms of domain architecture, ABC transporter spans 3–237 (ITVRNLHKRF…PRSAFVYEFL (235 aa)). ATP is bound at residue 35–42 (GPSGCGKT).

This sequence belongs to the ABC transporter superfamily. Sulfate/tungstate importer (TC 3.A.1.6) family. As to quaternary structure, the complex is composed of two ATP-binding proteins (CysA), two transmembrane proteins (CysT and CysW) and a solute-binding protein (CysP).

The protein localises to the cell inner membrane. It carries out the reaction sulfate(out) + ATP + H2O = sulfate(in) + ADP + phosphate + H(+). The enzyme catalyses thiosulfate(out) + ATP + H2O = thiosulfate(in) + ADP + phosphate + H(+). Functionally, part of the ABC transporter complex CysAWTP involved in sulfate/thiosulfate import. Responsible for energy coupling to the transport system. The chain is Sulfate/thiosulfate import ATP-binding protein CysA from Burkholderia pseudomallei (strain K96243).